The chain runs to 430 residues: Asparagine--tRNA ligase (430 aa).

It belongs to the class-II aminoacyl-tRNA synthetase family. In terms of assembly, homodimer.

The protein localises to the cytoplasm. It catalyses the reaction tRNA(Asn) + L-asparagine + ATP = L-asparaginyl-tRNA(Asn) + AMP + diphosphate + H(+). The chain is Asparagine--tRNA ligase from Staphylococcus aureus (strain USA300).